The following is a 487-amino-acid chain: b(0,+)-type amino acid transporter 1 (487 aa).

The disordered stretch occupies residues 1-20; the sequence is MEETSLRRRREDEKSTHSTE. Over 1–31 the chain is Cytoplasmic; the sequence is MEETSLRRRREDEKSTHSTELKTTSLQKEVG. S18 carries the phosphoserine modification. Residues 32–55 form a helical membrane-spanning segment; that stretch reads LLSGICIIVGTIIGSGIFISPKSV. 43–47 provides a ligand contact to L-arginine; sequence IIGSG. The Extracellular segment spans residues 56–62; that stretch reads LANTESV. The helical transmembrane segment at 63–84 threads the bilayer; sequence GPCLIIWAACGILATLGALCFA. Over 85–110 the chain is Cytoplasmic; the sequence is ELGTMITKSGGEYPYLMEAFGPIPAY. A helical transmembrane segment spans residues 111–137; that stretch reads LFSWTSLIVMKPSSFAIICLSFSEYVC. Over 138–147 the chain is Extracellular; the sequence is AAFYSGCKPP. Helical transmembrane passes span 148–169 and 170–193; these read AVVV…NALS and VRLG…IIII. Residues 194–217 lie on the Extracellular side of the membrane; it reads SGLVFLAQGNVKNFQNSFEGTQTS. Residues 218–238 traverse the membrane as a helical segment; that stretch reads VGAISLAFYNGLWAYDGWNQL. D233 provides a ligand contact to L-arginine. The Cytoplasmic portion of the chain corresponds to 239–251; that stretch reads NYITEELRNPYRN. Residues 252–274 form a helical membrane-spanning segment; sequence LPMAIVIGIPLVTVCYILMNIAY. The Extracellular segment spans residues 275 to 302; the sequence is FTVMTPTELLQSQAVAVTFGDRVLYPAS. Residues 303 to 325 form a helical membrane-spanning segment; it reads WVVPLFVAFSTIGAANGTCFTAG. Topologically, residues 326-351 are cytoplasmic; sequence RLIYVAGREGHMLKVLSYISVKRLTP. 2 helical membrane passes run 352-370 and 371-391; these read APAL…IPGD and INSL…MTIL. The Cytoplasmic portion of the chain corresponds to 392-410; sequence GLVVMRFTRKDLERPIKVP. Residues 411–431 form a helical membrane-spanning segment; it reads LFIPIIVILVSLFLILAPIIS. The Extracellular portion of the chain corresponds to 432–434; the sequence is EPA. The helical transmembrane segment at 435–450 threads the bilayer; sequence WEYLYCVLFILSGLIF. Residues 451–487 are Cytoplasmic-facing; that stretch reads YFLFVYYKFGWAQRISRPVTKHLQMLMEVVPPEKDPE.

The protein belongs to the amino acid-polyamine-organocation (APC) superfamily. Disulfide-linked heterodimer composed of the catalytic light chain subunit SLC7A9 and the heavy chain subunit SLC3A1. The heterodimer is the minimal functional unit. Assembles in heterotetramers (dimers of heterodimers) and higher order oligomers; the oligomerization is mediated by SLC3A1 likely to prevent degradation and facilitate heteromer trafficking to the plasma membrane. Interacts with CAV1. In terms of tissue distribution, expressed in the brush border membrane in the kidney (at protein level).

The protein resides in the apical cell membrane. It catalyses the reaction L-leucine(out) + L-arginine(in) = L-leucine(in) + L-arginine(out). The catalysed reaction is L-histidine(out) + L-arginine(in) = L-histidine(in) + L-arginine(out). It carries out the reaction L-arginine(in) + L-phenylalanine(out) = L-arginine(out) + L-phenylalanine(in). The enzyme catalyses L-cysteine(out) + L-arginine(in) = L-cysteine(in) + L-arginine(out). It catalyses the reaction L-cystine(out) + L-arginine(in) = L-cystine(in) + L-arginine(out). The catalysed reaction is L-lysine(out) + L-arginine(in) = L-lysine(in) + L-arginine(out). In terms of biological role, associates with SLC3A1 to form a functional transporter complex that mediates the electrogenic exchange between cationic amino acids and neutral amino acids, with a stoichiometry of 1:1. Has system b(0,+)-like activity with high affinity for extracellular cationic amino acids and L-cystine and lower affinity for intracellular neutral amino acids. Substrate exchange is driven by high concentration of intracellular neutral amino acids and the intracellular reduction of L-cystine to L-cysteine. Required for reabsorption of L-cystine and dibasic amino acids across the brush border membrane in renal proximal tubules. The sequence is that of b(0,+)-type amino acid transporter 1 (Slc7a9) from Mus musculus (Mouse).